Reading from the N-terminus, the 337-residue chain is MMDKHKYRVEIQQMMFVSGEINDPPVETTSLIEDIVRGQVIEILLQSNKTAHLRGSRSILPEDVIFLIRHDKAKVNRLRTYLSWKDLRKNAKDQDASAGVASGTGNPGAGGEDDLKKAGGGEKDEKDGGNMMKVKKSQIKLPWELQFMFNEHPLENNDDNDDMDEDEREANIVTLKRLKMADDRTRNMTKEEYVHWSDCRQASFTFRKNKRFKDWSGISQLTEGKPHDDVIDILGFLTFEIVCSLTETALKIKQREQVLQTQKDKSQQSSQDNTNFEFASSTLHRKKRLFDGPENVINPLKPRHIEEAWRVLQTIDMRHRALTNFKGGRLSSKPIIM.

The disordered stretch occupies residues 92–131 (KDQDASAGVASGTGNPGAGGEDDLKKAGGGEKDEKDGGNM). The segment covering 113–128 (DDLKKAGGGEKDEKDG) has biased composition (basic and acidic residues). The residue at position 270 (Ser-270) is a Phosphoserine.

This sequence belongs to the SPT3 family. In terms of assembly, component of the 1.8 MDa SAGA (Spt-Ada-Gcn5 acetyltransferase) complex, which is composed of 19 subunits TRA1, SPT7, TAF5, NGG1/ADA3, SGF73, SPT20/ADA5, SPT8, TAF12, TAF6, HFI1/ADA1, UBP8, GCN5, ADA2, SPT3, SGF29, TAF10, TAF9, SGF11 and SUS1. The SAGA complex is composed of 4 modules, namely the HAT (histone acetyltransferase) module (GCN5, ADA2, NGG1/ADA3 and SGF29), the DUB (deubiquitinating) module (UBP8, SGF11, SGF73 and SUS1), the core or TAF (TBP-associated factor) module (TAF5, TAF6, TAF9, TAF10 and TAF12), and the Tra1 or SPT (Suppressor of Ty) module (TRA1, HFI1/ADA1, SPT3, SPT7, SPT8 and SPT20/ADA5). The Tra1/SPT module binds activators, the core module recruits TBP (TATA-binding protein), the HAT module contains the histone H3 acetyltransferase GCN5, and the DUB module comprises the histone H2B deubiquitinase UBP8. Also identified in an altered form of SAGA, named SALSA (SAGA altered, Spt8 absent) or SLIK (SAGA-like) complex, which contains a C-terminal truncated form of SPT7 and is missing SPT8. However, it has been shown that the SAGA and SAGA-like SALSA/SLIK transcriptional coactivators are structurally and biochemically equivalent.

It is found in the nucleus. The protein localises to the cytoplasm. Functionally, component of the transcription coactivator SAGA complex. SAGA acts as a general cofactor required for essentially all RNA polymerase II transcription. At the promoters, SAGA is required for transcription pre-initiation complex (PIC) recruitment. It influences RNA polymerase II transcriptional activity through different activities such as TBP interaction (via core/TAF module) and promoter selectivity, interaction with transcription activators (via Tra1/SPT module), and chromatin modification through histone acetylation (via HAT module) and deubiquitination (via DUB module). SAGA preferentially acetylates histones H3 (to form H3K9ac, H3K14ac, H3K18ac and H3K23ac) and H2B and deubiquitinates histone H2B. SAGA interacts with DNA via upstream activating sequences (UASs). Also identified in a modified version of SAGA named SALSA or SLIK. The cleavage of SPT7 and the absence of the SPT8 subunit in SLIK neither drive any major conformational differences in its structure compared with SAGA, nor significantly affect HAT, DUB, or DNA-binding activities. SPT3 is required for recruitment of TATA-binding protein (TBP) to SAGA-dependent promoters. During SAGA-mediated transcriptional inhibition, SPT3 and SPT8 prevent binding of TBP to the TATA box. Required for diploid filamentous growth and haploid invasive growth. The protein is SAGA complex subunit SPT3 (SPT3) of Saccharomyces cerevisiae (strain ATCC 204508 / S288c) (Baker's yeast).